A 273-amino-acid polypeptide reads, in one-letter code: Zinc finger protein 80 (273 aa).

2 consecutive C2H2-type zinc fingers follow at residues Tyr49 to His71 and Tyr77 to His99. The C2H2-type 3; atypical zinc-finger motif lies at Cys105 to His127. 4 C2H2-type zinc fingers span residues Tyr133–His155, Phe161–His183, Cys189–His211, and Tyr217–His239.

This sequence belongs to the krueppel C2H2-type zinc-finger protein family.

The protein localises to the nucleus. Functionally, may be involved in transcriptional regulation. This is Zinc finger protein 80 (ZNF80) from Homo sapiens (Human).